Here is a 479-residue protein sequence, read N- to C-terminus: ATP synthase subunit beta (479 aa).

An ATP-binding site is contributed by 162-169 (GGAGVGKT).

This sequence belongs to the ATPase alpha/beta chains family. In terms of assembly, F-type ATPases have 2 components, CF(1) - the catalytic core - and CF(0) - the membrane proton channel. CF(1) has five subunits: alpha(3), beta(3), gamma(1), delta(1), epsilon(1). CF(0) has three main subunits: a(1), b(2) and c(9-12). The alpha and beta chains form an alternating ring which encloses part of the gamma chain. CF(1) is attached to CF(0) by a central stalk formed by the gamma and epsilon chains, while a peripheral stalk is formed by the delta and b chains.

The protein resides in the cell membrane. It carries out the reaction ATP + H2O + 4 H(+)(in) = ADP + phosphate + 5 H(+)(out). Its function is as follows. Produces ATP from ADP in the presence of a proton gradient across the membrane. The catalytic sites are hosted primarily by the beta subunits. The chain is ATP synthase subunit beta from Mesoplasma florum (strain ATCC 33453 / NBRC 100688 / NCTC 11704 / L1) (Acholeplasma florum).